The following is a 213-amino-acid chain: MLAILDYKAGNQTSVRRALDHLGIPCVITADPEVIQGAAGVIFPGVGAAGQAMNELVTTGLDEVLRRQVQAGRPLLGICVGCQIMLDYSQENDTKALGIIPGECRLFNPAWTDEDGAPIRVPHMGWNHIVQRRPCELLKGIEPEAEFYFVHSYYPAPPEEYVIATCTYGAEFCAIHGGPGLWAVQFHPEKSGRPGLRLLANFHRYCTEAADAQ.

The 212-residue stretch at 1 to 212 (MLAILDYKAG…HRYCTEAADA (212 aa)) folds into the Glutamine amidotransferase type-1 domain. Catalysis depends on Cys-79, which acts as the Nucleophile. Residues His-187 and Glu-189 contribute to the active site.

As to quaternary structure, heterodimer of HisH and HisF.

It localises to the cytoplasm. It catalyses the reaction 5-[(5-phospho-1-deoxy-D-ribulos-1-ylimino)methylamino]-1-(5-phospho-beta-D-ribosyl)imidazole-4-carboxamide + L-glutamine = D-erythro-1-(imidazol-4-yl)glycerol 3-phosphate + 5-amino-1-(5-phospho-beta-D-ribosyl)imidazole-4-carboxamide + L-glutamate + H(+). The enzyme catalyses L-glutamine + H2O = L-glutamate + NH4(+). It participates in amino-acid biosynthesis; L-histidine biosynthesis; L-histidine from 5-phospho-alpha-D-ribose 1-diphosphate: step 5/9. Its function is as follows. IGPS catalyzes the conversion of PRFAR and glutamine to IGP, AICAR and glutamate. The HisH subunit catalyzes the hydrolysis of glutamine to glutamate and ammonia as part of the synthesis of IGP and AICAR. The resulting ammonia molecule is channeled to the active site of HisF. This is Imidazole glycerol phosphate synthase subunit HisH from Nitratidesulfovibrio vulgaris (strain ATCC 29579 / DSM 644 / CCUG 34227 / NCIMB 8303 / VKM B-1760 / Hildenborough) (Desulfovibrio vulgaris).